Reading from the N-terminus, the 205-residue chain is NADH dehydrogenase (205 aa).

FMN-binding positions include 17 to 21, Q73, 158 to 159, and R195; these read RRSIR and LG.

It belongs to the nitroreductase family. Homodimer. FMN is required as a cofactor.

The enzyme catalyses a ubiquinone + NADH + 5 H(+)(in) = a ubiquinol + NAD(+) + 4 H(+)(out). Its function is as follows. Can oxidize either NADH or NADPH with a preference for NADH. Can catalyze electron transfer from NADH to various electron acceptors which include, in addition to molecular oxygen, cytochrome c, 2,6 dichlorphenolindophenol, methylene blue, ferricyanide or P-nitroblue tetrazolium. The chain is NADH dehydrogenase (nox) from Thermus thermophilus (strain ATCC 27634 / DSM 579 / HB8).